Reading from the N-terminus, the 145-residue chain is Large ribosomal subunit protein mL59 (145 aa).

A compositionally biased stretch (basic and acidic residues) spans 123–135 (LKKTSKFKNERQK). A disordered region spans residues 123–145 (LKKTSKFKNERQKASKIAKPSPF).

Belongs to the mitochondrion-specific ribosomal protein mL59 family. In terms of assembly, component of the mitochondrial large ribosomal subunit (mt-LSU). Mature yeast 74S mitochondrial ribosomes consist of a small (37S) and a large (54S) subunit. The 37S small subunit contains a 15S ribosomal RNA (15S mt-rRNA) and at least 32 different proteins. The 54S large subunit contains a 21S rRNA (21S mt-rRNA) and at least 45 different proteins.

Its subcellular location is the mitochondrion. Functionally, component of the mitochondrial ribosome (mitoribosome), a dedicated translation machinery responsible for the synthesis of mitochondrial genome-encoded proteins, including at least some of the essential transmembrane subunits of the mitochondrial respiratory chain. The mitoribosomes are attached to the mitochondrial inner membrane and translation products are cotranslationally integrated into the membrane. The polypeptide is Large ribosomal subunit protein mL59 (mrpl25) (Schizosaccharomyces pombe (strain 972 / ATCC 24843) (Fission yeast)).